The following is a 588-amino-acid chain: Myc box-dependent-interacting protein 1 (588 aa).

A2 is modified (N-acetylalanine). The segment at 2–122 (AEMGSKGVTA…DYHQKLVDQA (121 aa)) is interaction with BIN2. Coiled-coil stretches lie at residues 15 to 42 (ASNVQKKLTRAQEKVLQKLGKADETKDE) and 193 to 274 (HLVA…EKQH). A BAR domain is found at 29–276 (VLQKLGKADE…LVSLEKQHGS (248 aa)). The tract at residues 279–355 (FTVKAQPSDS…PKHTPSKEMK (77 aa)) is disordered. Phosphoserine is present on residues S296, S298, and S304. Residue T308 is modified to Phosphothreonine. Phosphoserine occurs at positions 324 and 332. The tract at residues 379-422 (FEAPGPFSEQASLLDLDFEPLPPVASPVKAPTPSGQSIPWDLWE) is clathrin-binding. Positions 448–483 (PSQTAEPGPAQPAEASEVVGGTQEPGETAASEATSS) are disordered. Residues 474 to 483 (ETAASEATSS) show a composition bias toward low complexity. The region spanning 515–588 (GFMFKVQAQH…FPENFTERVQ (74 aa)) is the SH3 domain.

In terms of assembly, heterodimer with AMPH. Binds SH3GLB1. Interacts (via SH3 domain) with DNM1. Interacts with SYNJ1. Interacts (via SH3 domain) with DNM2. Interacts with CLTC. Interacts with AP2A2. Interacts with AP2B1. Interacts with MYC (via N-terminal transactivation domain); the interaction requires the integrity of the conserved MYC box regions 1 and 2. Interacts with BIN2. Interacts with SNX4. Interacts (via BAR domain) with BACE1. Binds (via BAR domain) F-actin. In terms of processing, phosphorylated by protein kinase C. In terms of tissue distribution, highly expressed in the brain and muscle. Isoform AMPH2-1 is expressed only in the brain where it is concentrated in axon initial segments and nodes of Ranvier. Isoform AMPH2-2 is widely expressed.

Its subcellular location is the nucleus. It localises to the cytoplasm. It is found in the endosome. The protein localises to the cell membrane. The protein resides in the sarcolemma. Its subcellular location is the T-tubule. Functionally, is a key player in the control of plasma membrane curvature, and membrane shaping and remodeling. Required in muscle cells for the formation of T-tubules, tubular invaginations of the plasma membrane that function in depolarization-contraction coupling. Required in muscle cells for the formation of T-tubules, tubular invaginations of the plasma membrane that function in depolarization-contraction coupling. Is a negative regulator of endocytosis. Is also involved in the regulation of intracellular vesicles sorting, modulation of BACE1 trafficking and the control of amyloid-beta production. In neuronal circuits, endocytosis regulation may influence the internalization of PHF-tau aggregates. May be involved in the regulation of MYC activity and the control cell proliferation. This chain is Myc box-dependent-interacting protein 1 (Bin1), found in Rattus norvegicus (Rat).